The primary structure comprises 194 residues: Probable GTP-binding protein EngB (194 aa).

Residues 22–194 (DLPEYALAGR…AWQFIKEGME (173 aa)) enclose the EngB-type G domain. Residues 30-37 (GRSNVGKS), 57-61 (GKTQT), 75-78 (DVPG), 142-145 (TKAD), and 174-176 (FSS) each bind GTP. Residues serine 37 and threonine 59 each coordinate Mg(2+).

It belongs to the TRAFAC class TrmE-Era-EngA-EngB-Septin-like GTPase superfamily. EngB GTPase family. Mg(2+) is required as a cofactor.

Necessary for normal cell division and for the maintenance of normal septation. In Listeria innocua serovar 6a (strain ATCC BAA-680 / CLIP 11262), this protein is Probable GTP-binding protein EngB.